The sequence spans 351 residues: uncharacterized protein (351 aa).

Residues histidine 23, histidine 25, lysine 151, histidine 184, histidine 212, and aspartate 270 each coordinate Zn(2+). Lysine 151 carries the post-translational modification N6-carboxylysine.

It belongs to the metallo-dependent hydrolases superfamily. Phosphotriesterase family. Zn(2+) is required as a cofactor.

This is an uncharacterized protein from Mycoplasma pneumoniae (strain ATCC 29342 / M129 / Subtype 1) (Mycoplasmoides pneumoniae).